Here is a 102-residue protein sequence, read N- to C-terminus: Mini zinc finger protein 1 (102 aa).

The span at 1–13 (MMKKRQMVIKQRS) shows a compositional bias: basic residues. The segment at 1-34 (MMKKRQMVIKQRSRNSNTSSSWTTTSSSSSSSEI) is disordered. Residues 14–32 (RNSNTSSSWTTTSSSSSSS) show a composition bias toward low complexity. The segment at 39–88 (YVECQKNHAANIGGYAVDGCREFMAAGVEGTVDALRCAACGCHRNFHRKE) adopts a ZF-HD dimerization-type; degenerate zinc-finger fold.

As to quaternary structure, homo- and heterodimers. Interacts with ZHD1, ZHD5, ZHD6, ZHD7, ZHD8, ZHD10 and ZHD13. Mostly expressed in roots and stems, present in siliques and seedlings, and weakly observed in petioles, leaves and flowers.

Its subcellular location is the cytoplasm. Its function is as follows. Inhibits zinc finger homeodomain (ZHD) transcription factors, such as ZHD5, by interacting with them to prevent both their nuclear localization and their DNA-binding properties. Involved in integrating signals from multiple hormones by preventing the expression of genes involved in gibberellic acid (GA), auxin and brassinosteroid signaling and by promoting the expression of abscisic acid (ABA)-responsive genes. Regulates several development aspects, including photomorphogenesis, apical dominance, longevity, flower morphology and fertility, as well as root and stem elongation. Promotes the formation of ectopic shoot meristems on leaf margins. This is Mini zinc finger protein 1 (MIF1) from Arabidopsis thaliana (Mouse-ear cress).